The chain runs to 503 residues: GTPase Obg (503 aa).

Positions 2–159 (PQFVDRVVLH…KDVILELKSM (158 aa)) constitute an Obg domain. The OBG-type G domain maps to 160–340 (ADVGLVGFPS…LKYALMDIVK (181 aa)). Residues 166 to 173 (GFPSAGKS), 191 to 195 (FTTLV), 212 to 215 (DVPG), 292 to 295 (NKMD), and 321 to 323 (STV) each bind GTP. Mg(2+) contacts are provided by Ser-173 and Thr-193. Residues 371–444 (EFEVEADPSA…IGEITFEWDP (74 aa)) enclose the OCT domain. Basic and acidic residues predominate over residues 457–476 (RGTDVRLEQNTRATPEERKR). The interval 457–503 (RGTDVRLEQNTRATPEERKRASQARRGLIDENDFGDGEVAERERWQG) is disordered.

This sequence belongs to the TRAFAC class OBG-HflX-like GTPase superfamily. OBG GTPase family. Monomer. Mg(2+) serves as cofactor.

The protein resides in the cytoplasm. In terms of biological role, an essential GTPase which binds GTP, GDP and possibly (p)ppGpp with moderate affinity, with high nucleotide exchange rates and a fairly low GTP hydrolysis rate. Plays a role in control of the cell cycle, stress response, ribosome biogenesis and in those bacteria that undergo differentiation, in morphogenesis control. The polypeptide is GTPase Obg (Corynebacterium jeikeium (strain K411)).